The following is a 153-amino-acid chain: Cytochrome c-type biogenesis protein CcmE (153 aa).

The Cytoplasmic portion of the chain corresponds to 1–8 (MMTPRQRR). A helical; Signal-anchor for type II membrane protein transmembrane segment spans residues 9-29 (MTWVALMVAGVSLAAFFALTA). The Periplasmic portion of the chain corresponds to 30–153 (FQKNLLYFYT…PADYSEYRKK (124 aa)). Heme-binding residues include H124 and Y128. The tract at residues 134 to 153 (AESLKKNGGLPADYSEYRKK) is disordered.

The protein belongs to the CcmE/CycJ family.

The protein resides in the cell inner membrane. In terms of biological role, heme chaperone required for the biogenesis of c-type cytochromes. Transiently binds heme delivered by CcmC and transfers the heme to apo-cytochromes in a process facilitated by CcmF and CcmH. In Methylococcus capsulatus (strain ATCC 33009 / NCIMB 11132 / Bath), this protein is Cytochrome c-type biogenesis protein CcmE.